We begin with the raw amino-acid sequence, 241 residues long: Megakaryocyte and platelet inhibitory receptor G6b (241 aa).

The N-terminal stretch at 1 to 17 is a signal peptide; it reads MAVFLQLLPLLLSRAQG. At 18-142 the chain is on the extracellular side; it reads NPGASLDGRP…GPTHGSVYPQ (125 aa). Asn-32 is a glycosylation site (N-linked (GlcNAc...) asparagine). A helical transmembrane segment spans residues 143–163; the sequence is LLIPLLGAGLVLGLGALGLVW. Residues 164–241 are Cytoplasmic-facing; it reads WLHRRLPPQP…DASTIYAVVV (78 aa). 2 short sequence motifs (ITIM motif) span residues 209–214 and 235–240; these read LLYADL and TIYAVV. Phosphotyrosine is present on Tyr-211.

In terms of assembly, interacts (via ITIM motif) with PTPN6 and PTPN11. Binds to heparin. Post-translationally, all isoforms are N-glycosylated. Isoform E is O-glycosylated. In terms of processing, phosphorylated. As to expression, expressed in platelets. Expressed in a restricted set of hematopoietic cell lines including the erythroleukemia cell line K-562 and the T-cell leukemia cell lines MOLT-4 and Jurkat. Not detected in the monocyte-like cell line U-937, the B-cell-like cell line Raji, the fibroblast cell lines TK and HeLa, or the natural killer cell lines NKL, NK 62 and YT.

It is found in the endoplasmic reticulum. The protein localises to the golgi apparatus. Its subcellular location is the cell membrane. Inhibitory receptor that acts as a critical regulator of hematopoietic lineage differentiation, megakaryocyte function and platelet production. Inhibits platelet aggregation and activation by agonists such as ADP and collagen-related peptide. This regulation of megakaryocate function as well as platelet production ann activation is done through the inhibition (via the 2 ITIM motifs) of the receptors CLEC1B and GP6:FcRgamma signaling. Appears to operate in a calcium-independent manner. In terms of biological role, isoform B, displayed in this entry, is the only isoform to contain both a transmembrane region and 2 immunoreceptor tyrosine-based inhibitor motifs (ITIMs) and, thus, the only one which probably has a role of inhibitory receptor. Isoform A may be the activating counterpart of isoform B. In Homo sapiens (Human), this protein is Megakaryocyte and platelet inhibitory receptor G6b.